A 687-amino-acid polypeptide reads, in one-letter code: DNA ligase (687 aa).

Residues 34–38 (DAEYD), 83–84 (SL), and E117 each bind NAD(+). K119 functions as the N6-AMP-lysine intermediate in the catalytic mechanism. 4 residues coordinate NAD(+): R140, E182, K298, and K322. 4 residues coordinate Zn(2+): C416, C419, C434, and C439. The 79-residue stretch at 609–687 (EARGPFAGKT…EEEFVRLLKE (79 aa)) folds into the BRCT domain.

Belongs to the NAD-dependent DNA ligase family. LigA subfamily. Requires Mg(2+) as cofactor. It depends on Mn(2+) as a cofactor.

It catalyses the reaction NAD(+) + (deoxyribonucleotide)n-3'-hydroxyl + 5'-phospho-(deoxyribonucleotide)m = (deoxyribonucleotide)n+m + AMP + beta-nicotinamide D-nucleotide.. In terms of biological role, DNA ligase that catalyzes the formation of phosphodiester linkages between 5'-phosphoryl and 3'-hydroxyl groups in double-stranded DNA using NAD as a coenzyme and as the energy source for the reaction. It is essential for DNA replication and repair of damaged DNA. In Anaeromyxobacter dehalogenans (strain 2CP-C), this protein is DNA ligase.